A 187-amino-acid polypeptide reads, in one-letter code: Choriogonadotropin subunit beta variant 1 (187 aa).

An N-terminal signal peptide occupies residues 1 to 50; sequence MSTFPVLAEDIPLRERHVKGRVDPHFRAPKMEMFQRLLLLLLLSMGGTWA. Disulfide bonds link C59–C107, C73–C122, C76–C160, C84–C138, C88–C140, and C143–C150. Residues N63 and N80 are each glycosylated (N-linked (GlcNAc...) asparagine). Positions 161 to 187 are disordered; the sequence is DDPRFQDSSSSKAPPPSLPSPSRLPGP. The span at 173–187 shows a compositional bias: pro residues; that stretch reads APPPSLPSPSRLPGP.

This sequence belongs to the glycoprotein hormones subunit beta family. As to expression, expressed in placenta, testis and pituitary.

The protein localises to the secreted. The protein is Choriogonadotropin subunit beta variant 1 (CGB1) of Homo sapiens (Human).